The primary structure comprises 311 residues: Ferritin-like catalase Nec2 (311 aa).

The first 25 residues, Met1 to Ser25, serve as a signal peptide directing secretion. 3 N-linked (GlcNAc...) asparagine glycosylation sites follow: Asn128, Asn257, and Asn289.

In terms of assembly, forms homomultimers. As to expression, observed in all flowers organs; mainly expressed in nectaries and, to a lower extent, in petals and ovules, as well as in stigmas and calyx at low levels.

The enzyme catalyses 2 H2O2 = O2 + 2 H2O. Involved in the production of blood-red nectar containing the alkaloid nesocodin and that serves as a visual attractant for pollinator visitation, including vertebrates such as Phelsuma geckos. The nectar is initially acidic and pale yellow, but slowly becomes alkaline before turning into red within 24 hours. Together with NEC1 and NEC3, facilitates the condensation of sinapaldehyde ((E)-3,5-dimethoxy-4-hydroxycinnamaldehyde) and proline to form nesocodin, a pigment with a stable imine bond. Protects nesocodin from degradation by hydrogen peroxide H(2)O(2) by catalyzing the degradation of H(2)O(2) into water H(2)O and dioxygene O(2). The chain is Ferritin-like catalase Nec2 from Nesocodon mauritianus (Blue Mauritius bellflower).